A 132-amino-acid chain; its full sequence is Large ribosomal subunit protein bL17 (132 aa).

The protein belongs to the bacterial ribosomal protein bL17 family. In terms of assembly, part of the 50S ribosomal subunit. Contacts protein L32.

This chain is Large ribosomal subunit protein bL17, found in Shewanella woodyi (strain ATCC 51908 / MS32).